The chain runs to 255 residues: NAD-dependent protein deacylase (255 aa).

Positions 1 to 253 (MIEEAPRIIA…VKVKRCLENK (253 aa)) constitute a Deacetylase sirtuin-type domain. Residue 20-39 (GAGVSAESGIPTFRDRGGLW) coordinates NAD(+). Substrate is bound by residues Y64 and R67. Residue 98–101 (QNID) coordinates NAD(+). The active-site Proton acceptor is H116. Zn(2+)-binding residues include C124, C127, C151, and C154. NAD(+) is bound by residues 191 to 193 (GTS), 217 to 219 (NTK), and A235.

The protein belongs to the sirtuin family. Class III subfamily. Zn(2+) is required as a cofactor.

It is found in the cytoplasm. The enzyme catalyses N(6)-acetyl-L-lysyl-[protein] + NAD(+) + H2O = 2''-O-acetyl-ADP-D-ribose + nicotinamide + L-lysyl-[protein]. The catalysed reaction is N(6)-succinyl-L-lysyl-[protein] + NAD(+) + H2O = 2''-O-succinyl-ADP-D-ribose + nicotinamide + L-lysyl-[protein]. Functionally, NAD-dependent lysine deacetylase and desuccinylase that specifically removes acetyl and succinyl groups on target proteins. Modulates the activities of several proteins which are inactive in their acylated form. Deacetylates the N-terminal lysine residue of Alba, the major archaeal chromatin protein and that, in turn, increases Alba's DNA binding affinity, thereby repressing transcription. The protein is NAD-dependent protein deacylase of Thermococcus sibiricus (strain DSM 12597 / MM 739).